Here is a 420-residue protein sequence, read N- to C-terminus: Glutamate-1-semialdehyde 2,1-aminomutase (420 aa).

Position 261 is an N6-(pyridoxal phosphate)lysine (K261).

Belongs to the class-III pyridoxal-phosphate-dependent aminotransferase family. HemL subfamily. Pyridoxal 5'-phosphate is required as a cofactor.

It localises to the cytoplasm. The enzyme catalyses (S)-4-amino-5-oxopentanoate = 5-aminolevulinate. The protein operates within porphyrin-containing compound metabolism; protoporphyrin-IX biosynthesis; 5-aminolevulinate from L-glutamyl-tRNA(Glu): step 2/2. The polypeptide is Glutamate-1-semialdehyde 2,1-aminomutase (Thermoplasma volcanium (strain ATCC 51530 / DSM 4299 / JCM 9571 / NBRC 15438 / GSS1)).